The sequence spans 156 residues: Sec-independent protein translocase protein TatB (156 aa).

The chain crosses the membrane as a helical span at residues 2–22; the sequence is FSSVGWGEIFLLVVVGLVVIG. The segment at 100–156 is disordered; it reads KIMAEGTEGEAQRNKQAADNNANVVERPADGSTARPTQNDPKDGPNYSGGVSWTDII. Polar residues predominate over residues 113-122; sequence NKQAADNNAN.

The protein belongs to the TatB family. The Tat system comprises two distinct complexes: a TatABC complex, containing multiple copies of TatA, TatB and TatC subunits, and a separate TatA complex, containing only TatA subunits. Substrates initially bind to the TatABC complex, which probably triggers association of the separate TatA complex to form the active translocon.

Its subcellular location is the cell membrane. Functionally, part of the twin-arginine translocation (Tat) system that transports large folded proteins containing a characteristic twin-arginine motif in their signal peptide across membranes. Together with TatC, TatB is part of a receptor directly interacting with Tat signal peptides. TatB may form an oligomeric binding site that transiently accommodates folded Tat precursor proteins before their translocation. The chain is Sec-independent protein translocase protein TatB from Corynebacterium glutamicum (strain ATCC 13032 / DSM 20300 / JCM 1318 / BCRC 11384 / CCUG 27702 / LMG 3730 / NBRC 12168 / NCIMB 10025 / NRRL B-2784 / 534).